A 713-amino-acid chain; its full sequence is Nucleoporin NUP82 (713 aa).

The segment at 1-409 is interaction with NUP116; sequence MSQSSRLSAL…SDLNPLAGLK (409 aa). The interaction with NSP1 and NUP159 stretch occupies residues 463–713; sequence TSISTEKSDT…VSQEFTTKTQ (251 aa). Positions 582–713 form a coiled coil; the sequence is EAQNKKWDAQ…VSQEFTTKTQ (132 aa). Residues 607 to 623 carry the Bipartite nuclear localization signal motif; the sequence is KKLSQIAESNKFKEKKI.

As to quaternary structure, component of the nuclear pore complex (NPC). NPC constitutes the exclusive means of nucleocytoplasmic transport. NPCs allow the passive diffusion of ions and small molecules and the active, nuclear transport receptor-mediated bidirectional transport of macromolecules such as proteins, RNAs, ribonucleoparticles (RNPs), and ribosomal subunits across the nuclear envelope. Due to its 8-fold rotational symmetry, all subunits are present with 8 copies or multiples thereof. NUP82 is part of the NUP82 subcomplex. This subcomplex is the base for interactions with NUP116 and GLE2, with NUP42 and GLE1 and with DYN2.

The protein resides in the nucleus. It is found in the nuclear pore complex. The protein localises to the nucleus membrane. In terms of biological role, functions as a component of the nuclear pore complex (NPC). NPC components, collectively referred to as nucleoporins (NUPs), can play the role of both NPC structural components and of docking or interaction partners for transiently associated nuclear transport factors. It is specifically involved as part of the NUP82-NUP159-NSP1 subcomplex in nuclear mRNA and pre-ribosome export by acting as a linker tethering nucleoporins that are directly involved in nuclear transport to the NPC via its coiled-coil domain. The sequence is that of Nucleoporin NUP82 (NUP82) from Saccharomyces cerevisiae (strain ATCC 204508 / S288c) (Baker's yeast).